We begin with the raw amino-acid sequence, 340 residues long: tRNA N6-adenosine threonylcarbamoyltransferase (340 aa).

Residues H115 and H119 each contribute to the Fe cation site. Substrate is bound by residues 137-141, D170, G183, D187, and N276; that span reads IVSGG. Residue D304 coordinates Fe cation.

The protein belongs to the KAE1 / TsaD family. Fe(2+) serves as cofactor.

The protein resides in the cytoplasm. The enzyme catalyses L-threonylcarbamoyladenylate + adenosine(37) in tRNA = N(6)-L-threonylcarbamoyladenosine(37) in tRNA + AMP + H(+). Required for the formation of a threonylcarbamoyl group on adenosine at position 37 (t(6)A37) in tRNAs that read codons beginning with adenine. Is involved in the transfer of the threonylcarbamoyl moiety of threonylcarbamoyl-AMP (TC-AMP) to the N6 group of A37, together with TsaE and TsaB. TsaD likely plays a direct catalytic role in this reaction. This chain is tRNA N6-adenosine threonylcarbamoyltransferase, found in Staphylococcus epidermidis (strain ATCC 35984 / DSM 28319 / BCRC 17069 / CCUG 31568 / BM 3577 / RP62A).